The primary structure comprises 1374 residues: MAQTSTYSYTERKRIRKSFGSRDSVLKVPYLLQMQRDAYTAFLQADTAPQKRSIEGLQAAFNSAFPIVSHNGFVEMKFVEYNLAKPAFDVRECQTRGLTFASAVRAKVQLIIYDRESSTSQSKVVKEVKEQEVYMGEVPLMTDKGSFIINGTERVIVSQLHRSPGVFFEHDKGKTHSSGKLLFSARIIPYRGSWLDFEFDPKDILYFRVDRRRKMPVTILLKAIGLNPESILANFFVNDNFRLMDSGAQLEFVPERLRGEVARFDITDKAGKVIVAKDKRVTARHTRELEQSGTTHISVPEDFLIGRVVARNIVDGDTGEILAKANEELTEALLKKLRAAGVQDLQVIYTNELDQGAYISQTLRIDETVDEFAARVAIYRMMRPGEPPTEDAVQALFQRLFYNPDTYDLSRVGRMKFNAKIGRDEATGPMVLSNDDILAVVKILVDLRNGKGEVDDIDHLGNRRVRCVGELAENQYRTGLARIEKAVKERLGQAEQEPLMPHDLINSKPISAALKEFFGASQLSQFMDQTNPLAEITHKRRVSALGPGGLTRERAGFEVRDVHVTHYGRVCPIETPEGPNIGLINSLALYARLNEYGFIETPYRRVVDGKVTMEIDYLSAIEEGKYIIAQANATLDAEGRLTGDLVSAREKGESTLVSADRVQYMDVSPAQIVSVAASLVPFLEHDDANRALMGANMSRQAVPVLRPEKPMVGTGIERVAAVDSGTVVTANRGGVVDYVDATRIVVRVNDDEAVAGEVGVDIYNLIKYQRSNQNTNIHQRPIVKKGDKLAKGDVIADGASTDLGEIAIGQNMLIAFMPWNGYNFEDSILISERVVAEDRYTSIHIEELVVMARDTKLGAEEITRDIPNLSEQQLNRLDESGIIYVGAEVQPGDTLVGKVTPKGETTLTPEEKLLRAIFGEKASDVKDTSLRVDQGSQGTVIDVQVFTREGIQRDKRAQQIIDDELKRFRLDLNDQLRIVEADAFDRIEKLLTGRVANGGPQKLAKGTKIDKAYLASVEKFHWFDIRPAEEEVATQLESIKNALEQTRHSFDLAFEEKRKKLTQGDELPAGVLKMVKVYLAVKRRLQPGDKMAGRHGNKGVVSKIVPVEDMPYMADGTPADIVLNPLGVPSRMNIGQVLEVHLGWAGKGMGQRIGDMLQREAKTAELRKFLEEIYNSRGRKEELSQLSDDEILAMARELTSGVPFASPVFDGASEEEIKDMLKLAYPDDLAQAKGLTETRTQAYLYDGRTGERFERPTTVGYMHYLKLHHLVDDKMHARSTGPYSLVTQQPLGGKAQFGGQRFGEMEVWALEAYGAAYVLQEMLTVKSDDVQGRTKVYENIVKGEHAIEAGMPESFNVLVKEIRSLGLDIELERS.

It belongs to the RNA polymerase beta chain family. The RNAP catalytic core consists of 2 alpha, 1 beta, 1 beta' and 1 omega subunit. When a sigma factor is associated with the core the holoenzyme is formed, which can initiate transcription.

The catalysed reaction is RNA(n) + a ribonucleoside 5'-triphosphate = RNA(n+1) + diphosphate. DNA-dependent RNA polymerase catalyzes the transcription of DNA into RNA using the four ribonucleoside triphosphates as substrates. The polypeptide is DNA-directed RNA polymerase subunit beta (Acidovorax ebreus (strain TPSY) (Diaphorobacter sp. (strain TPSY))).